A 59-amino-acid polypeptide reads, in one-letter code: Ribosome biogenesis protein Nop10 (59 aa).

It belongs to the NOP10 family.

In terms of biological role, involved in ribosome biogenesis; more specifically in 18S rRNA pseudouridylation and in cleavage of pre-rRNA. The protein is Ribosome biogenesis protein Nop10 of Thermococcus gammatolerans (strain DSM 15229 / JCM 11827 / EJ3).